The chain runs to 31 residues: Kalata-B9 (31 aa).

Residues 1-31 (GSVFNCGETCVLGTCYTPGCTCNTYRVCTKD) constitute a cross-link (cyclopeptide (Gly-Asp)). Intrachain disulfides connect Cys-6–Cys-20, Cys-10–Cys-22, and Cys-15–Cys-28.

The protein belongs to the cyclotide family. Bracelet subfamily. In terms of processing, this peptide occurs in both cyclic and linear forms.

Probably participates in a plant defense mechanism. The protein is Kalata-B9 of Oldenlandia affinis.